A 779-amino-acid polypeptide reads, in one-letter code: Nucleolar complex protein 3 homolog (779 aa).

2 disordered regions span residues 1 to 20 (MGFA…TNKT) and 100 to 189 (NAKR…SHLS). Residues 114–124 (DSDEDEDEDDV) are compositionally biased toward acidic residues. Residues 136 to 160 (EEGHEELLPIKLKDGTLIRPTREKE) are compositionally biased toward basic and acidic residues. Positions 161 to 178 (VEEQEEEEKSDIDEGEED) are enriched in acidic residues. Positions 434–474 (AKKYQIKKERASKTAKKYKKQLARLEADLLEVEAEESLTKK) form a coiled coil.

This sequence belongs to the CBF/MAK21 family.

The protein resides in the nucleus. It is found in the nucleolus. The polypeptide is Nucleolar complex protein 3 homolog (Caenorhabditis briggsae).